The primary structure comprises 67 residues: Protein AaeX (67 aa).

A run of 2 helical transmembrane segments spans residues 3 to 23 (LFPVIVIFGLSFPPIFFELLL) and 43 to 63 (FVWHPALFNTALYCCLFYLLS).

Belongs to the AaeX family.

Its subcellular location is the cell membrane. The sequence is that of Protein AaeX from Cronobacter sakazakii (strain ATCC BAA-894) (Enterobacter sakazakii).